We begin with the raw amino-acid sequence, 251 residues long: Tungstate/molybdate/chromate-binding protein ModA (251 aa).

A signal peptide spans 1 to 23 (MTTRLPQLLLALLASAVSLAASA). Residues threonine 60 and isoleucine 168 each contribute to the molybdate site.

The protein belongs to the bacterial solute-binding protein ModA family. As to quaternary structure, the complex is composed of two ATP-binding proteins (ModC), two transmembrane proteins (ModB) and a solute-binding protein (ModA).

The protein resides in the periplasm. In terms of biological role, part of the ABC transporter complex ModABC involved in the transport of molybdenum into the cell. Binds tungstate and molybdate. Can also bind chromate, with lower affinity. Plays an essential role in recruitment of molybdate for nitrate reduction. This is Tungstate/molybdate/chromate-binding protein ModA from Pseudomonas aeruginosa (strain ATCC 15692 / DSM 22644 / CIP 104116 / JCM 14847 / LMG 12228 / 1C / PRS 101 / PAO1).